The chain runs to 186 residues: Potassium-transporting ATPase KdpC subunit (186 aa).

Residues 10-30 (LTIITMVLCGFLFPLAITLIG) form a helical membrane-spanning segment.

Belongs to the KdpC family. The system is composed of three essential subunits: KdpA, KdpB and KdpC.

Its subcellular location is the cell membrane. In terms of biological role, part of the high-affinity ATP-driven potassium transport (or Kdp) system, which catalyzes the hydrolysis of ATP coupled with the electrogenic transport of potassium into the cytoplasm. This subunit acts as a catalytic chaperone that increases the ATP-binding affinity of the ATP-hydrolyzing subunit KdpB by the formation of a transient KdpB/KdpC/ATP ternary complex. In Staphylococcus aureus (strain MSSA476), this protein is Potassium-transporting ATPase KdpC subunit.